A 694-amino-acid polypeptide reads, in one-letter code: Elongation factor G (694 aa).

Residues Glu10–Leu285 form the tr-type G domain. Residues Ala19–Thr26, Asp83–His87, and Asn137–Asp140 each bind GTP.

This sequence belongs to the TRAFAC class translation factor GTPase superfamily. Classic translation factor GTPase family. EF-G/EF-2 subfamily.

The protein localises to the cytoplasm. Catalyzes the GTP-dependent ribosomal translocation step during translation elongation. During this step, the ribosome changes from the pre-translocational (PRE) to the post-translocational (POST) state as the newly formed A-site-bound peptidyl-tRNA and P-site-bound deacylated tRNA move to the P and E sites, respectively. Catalyzes the coordinated movement of the two tRNA molecules, the mRNA and conformational changes in the ribosome. This is Elongation factor G from Lactobacillus delbrueckii subsp. bulgaricus (strain ATCC 11842 / DSM 20081 / BCRC 10696 / JCM 1002 / NBRC 13953 / NCIMB 11778 / NCTC 12712 / WDCM 00102 / Lb 14).